A 168-amino-acid chain; its full sequence is Photosystem I assembly protein Ycf3 (168 aa).

3 TPR repeats span residues 35–68 (AFTY…EIDP), 72–105 (SYIL…NPFL), and 120–153 (GEQA…TPGN).

The protein belongs to the Ycf3 family.

It localises to the plastid. The protein resides in the chloroplast thylakoid membrane. In terms of biological role, essential for the assembly of the photosystem I (PSI) complex. May act as a chaperone-like factor to guide the assembly of the PSI subunits. The polypeptide is Photosystem I assembly protein Ycf3 (Panax ginseng (Korean ginseng)).